The sequence spans 173 residues: Crossover junction endodeoxyribonuclease RuvC (173 aa).

Catalysis depends on residues Asp8, Glu68, and Asp140. 3 residues coordinate Mg(2+): Asp8, Glu68, and Asp140.

Belongs to the RuvC family. As to quaternary structure, homodimer which binds Holliday junction (HJ) DNA. The HJ becomes 2-fold symmetrical on binding to RuvC with unstacked arms; it has a different conformation from HJ DNA in complex with RuvA. In the full resolvosome a probable DNA-RuvA(4)-RuvB(12)-RuvC(2) complex forms which resolves the HJ. Mg(2+) is required as a cofactor.

The protein localises to the cytoplasm. It catalyses the reaction Endonucleolytic cleavage at a junction such as a reciprocal single-stranded crossover between two homologous DNA duplexes (Holliday junction).. In terms of biological role, the RuvA-RuvB-RuvC complex processes Holliday junction (HJ) DNA during genetic recombination and DNA repair. Endonuclease that resolves HJ intermediates. Cleaves cruciform DNA by making single-stranded nicks across the HJ at symmetrical positions within the homologous arms, yielding a 5'-phosphate and a 3'-hydroxyl group; requires a central core of homology in the junction. The consensus cleavage sequence is 5'-(A/T)TT(C/G)-3'. Cleavage occurs on the 3'-side of the TT dinucleotide at the point of strand exchange. HJ branch migration catalyzed by RuvA-RuvB allows RuvC to scan DNA until it finds its consensus sequence, where it cleaves and resolves the cruciform DNA. The polypeptide is Crossover junction endodeoxyribonuclease RuvC (Saccharophagus degradans (strain 2-40 / ATCC 43961 / DSM 17024)).